Here is a 512-residue protein sequence, read N- to C-terminus: Altronate oxidoreductase (512 aa).

26 to 37 lines the NAD(+) pocket; that stretch reads VLQFGEGNFLRG.

Belongs to the mannitol dehydrogenase family. UxaB subfamily.

It catalyses the reaction D-altronate + NAD(+) = keto-D-tagaturonate + NADH + H(+). It participates in carbohydrate metabolism; pentose and glucuronate interconversion. The protein is Altronate oxidoreductase of Halalkalibacterium halodurans (strain ATCC BAA-125 / DSM 18197 / FERM 7344 / JCM 9153 / C-125) (Bacillus halodurans).